The sequence spans 146 residues: Acetyl-CoA decarbonylase/synthase complex subunit epsilon (146 aa).

Belongs to the CdhB family. As to quaternary structure, heterotetramer of two alpha and two epsilon subunits. The ACDS complex is made up of alpha, epsilon, beta, gamma and delta subunits with a probable stoichiometry of (alpha(2)epsilon(2))(4)-beta(8)-(gamma(1)delta(1))(8).

Its function is as follows. Part of a complex that catalyzes the reversible cleavage of acetyl-CoA, allowing autotrophic growth from CO(2). The alpha-epsilon subcomponent functions as a carbon monoxide dehydrogenase. The precise role of the epsilon subunit is unclear; it may have a stabilizing role within the alpha(2)epsilon(2) component and/or be involved in electron transfer to FAD during a potential FAD-mediated CO oxidation. This chain is Acetyl-CoA decarbonylase/synthase complex subunit epsilon, found in Methanocaldococcus jannaschii (strain ATCC 43067 / DSM 2661 / JAL-1 / JCM 10045 / NBRC 100440) (Methanococcus jannaschii).